Consider the following 273-residue polypeptide: Undecaprenyl-diphosphatase (273 aa).

A run of 7 helical transmembrane segments spans residues 13–35 (GLVE…VFGN), 45–62 (VFEI…VFEY), 82–102 (FVLN…LFGK), 108–128 (LFNP…ILWV), 186–206 (TEFS…YDVL), 219–239 (LILI…KALL), and 250–270 (FAYY…SGWI).

The protein belongs to the UppP family.

Its subcellular location is the cell inner membrane. The catalysed reaction is di-trans,octa-cis-undecaprenyl diphosphate + H2O = di-trans,octa-cis-undecaprenyl phosphate + phosphate + H(+). Its function is as follows. Catalyzes the dephosphorylation of undecaprenyl diphosphate (UPP). Confers resistance to bacitracin. In Neisseria meningitidis serogroup A / serotype 4A (strain DSM 15465 / Z2491), this protein is Undecaprenyl-diphosphatase.